Here is a 208-residue protein sequence, read N- to C-terminus: MRGKFIVIEGLEGAGKSNAQRIVSETLAAHGIEFITTREPGGTPIAEALRNLWKEGEDGEHTTDKAEVLMIYAARIQLVETVIEPALASGKWVVGDRHNMSSQAYQGGGRGLAELVDEVGSAILGDFEPDFTIYLDIEPSIGLERARGRGALDRIEQLDIDFFHRTRERYVSLVKDNPKAVLINAEPAIEQVSADIQQAVEIFLTSEK.

ATP is bound at residue 10-17 (GLEGAGKS).

Belongs to the thymidylate kinase family.

It catalyses the reaction dTMP + ATP = dTDP + ADP. Its function is as follows. Phosphorylation of dTMP to form dTDP in both de novo and salvage pathways of dTTP synthesis. The sequence is that of Thymidylate kinase from Glaesserella parasuis serovar 5 (strain SH0165) (Haemophilus parasuis).